The primary structure comprises 368 residues: Glutamate 5-kinase (368 aa).

Position 13 (K13) interacts with ATP. Residues S54, D141, and N153 each coordinate substrate. An ATP-binding site is contributed by 173–174; sequence SD. The PUA domain occupies 278–355; that stretch reads RGVITVDEGA…DEIEAILGYA (78 aa).

This sequence belongs to the glutamate 5-kinase family.

The protein localises to the cytoplasm. The enzyme catalyses L-glutamate + ATP = L-glutamyl 5-phosphate + ADP. It participates in amino-acid biosynthesis; L-proline biosynthesis; L-glutamate 5-semialdehyde from L-glutamate: step 1/2. Functionally, catalyzes the transfer of a phosphate group to glutamate to form L-glutamate 5-phosphate. This is Glutamate 5-kinase from Ruegeria sp. (strain TM1040) (Silicibacter sp.).